Here is a 474-residue protein sequence, read N- to C-terminus: Coiled-coil domain-containing protein 6 (474 aa).

Residues 1-10 show a composition bias toward acidic residues; it reads MADSASESDT. Residues 1-47 form a disordered region; the sequence is MADSASESDTDGAGGNSSSSAAMQSSCSSTSGGGGGGGGGGGGGKSG. Ala-2 is subject to N-acetylalanine. Over residues 16–30 the composition is skewed to low complexity; sequence NSSSSAAMQSSCSST. A compositionally biased stretch (gly residues) spans 31–47; it reads SGGGGGGGGGGGGGKSG. Phosphoserine is present on Ser-52. A coiled-coil region spans residues 53 to 237; sequence PFRLEELTNR…KRILQEKLDQ (185 aa). Tandem repeats lie at residues 106–134, 135–163, and 164–192. Positions 106–235 are 5 X 29 AA tandem repeats; that stretch reads EQEEEFISNT…AEKRILQEKL (130 aa). The 4; approximate repeat unit spans residues 193-206; that stretch reads EQLRREKIDLENTL. Repeat unit 5 spans residues 207–235; it reads EQEQEALVNRLWKRMDKLEAEKRILQEKL. Phosphoserine occurs at positions 240, 244, 249, 254, 284, and 323. Residues 253–332 are a coiled coil; the sequence is DSPENMMRHI…SESESSLEMD (80 aa). Residues 342–369 are disordered; sequence AQGLRPRTVSSPIPYTPSPSSSRPISPG. Thr-349 bears the Phosphothreonine mark. Low complexity predominate over residues 351-368; sequence SSPIPYTPSPSSSRPISP. Phosphoserine occurs at positions 363 and 367. Arg-387 carries the omega-N-methylarginine modification. Phosphoserine is present on residues Ser-395 and Ser-413. A disordered region spans residues 397 to 474; the sequence is GLHVQHMGTS…QHSAHPSSQP (78 aa). The span at 426–451 shows a compositional bias: pro residues; the sequence is PTPPPSPNTQTPVQPPPPPPPPPMQP. Residues 442–451 carry the SH3-binding motif; it reads PPPPPPPMQP. Residues 459–474 show a composition bias toward low complexity; sequence SQPTPSQHSAHPSSQP.

As to expression, ubiquitously expressed.

Its subcellular location is the cytoplasm. It is found in the cytoskeleton. This Homo sapiens (Human) protein is Coiled-coil domain-containing protein 6 (CCDC6).